The chain runs to 407 residues: Phosphopentomutase (407 aa).

Residues Asp-10, Asp-306, His-311, Asp-347, His-348, and His-359 each contribute to the Mn(2+) site.

Belongs to the phosphopentomutase family. Mn(2+) serves as cofactor.

It is found in the cytoplasm. It carries out the reaction 2-deoxy-alpha-D-ribose 1-phosphate = 2-deoxy-D-ribose 5-phosphate. It catalyses the reaction alpha-D-ribose 1-phosphate = D-ribose 5-phosphate. It participates in carbohydrate degradation; 2-deoxy-D-ribose 1-phosphate degradation; D-glyceraldehyde 3-phosphate and acetaldehyde from 2-deoxy-alpha-D-ribose 1-phosphate: step 1/2. In terms of biological role, isomerase that catalyzes the conversion of deoxy-ribose 1-phosphate (dRib-1-P) and ribose 1-phosphate (Rib-1-P) to deoxy-ribose 5-phosphate (dRib-5-P) and ribose 5-phosphate (Rib-5-P), respectively. In Buchnera aphidicola subsp. Acyrthosiphon pisum (strain 5A), this protein is Phosphopentomutase.